We begin with the raw amino-acid sequence, 439 residues long: 23S rRNA (uracil(1939)-C(5))-methyltransferase RlmD (439 aa).

The 59-residue stretch at 10–68 (KSTQPQRIEFTVDSLDHHCVGIGRHQGKAIFIEGALPGEQVKARILDDKKQYAHAALQQ) folds into the TRAM domain. [4Fe-4S] cluster-binding residues include Cys81, Cys87, Cys90, and Cys169. S-adenosyl-L-methionine contacts are provided by Gln273, Phe302, Asn307, Glu323, Asp350, and Asp371. Catalysis depends on Cys397, which acts as the Nucleophile.

The protein belongs to the class I-like SAM-binding methyltransferase superfamily. RNA M5U methyltransferase family. RlmD subfamily.

It carries out the reaction uridine(1939) in 23S rRNA + S-adenosyl-L-methionine = 5-methyluridine(1939) in 23S rRNA + S-adenosyl-L-homocysteine + H(+). Catalyzes the formation of 5-methyl-uridine at position 1939 (m5U1939) in 23S rRNA. The chain is 23S rRNA (uracil(1939)-C(5))-methyltransferase RlmD from Aeromonas salmonicida (strain A449).